Here is a 115-residue protein sequence, read N- to C-terminus: U3-lycotoxin-Ls1k (115 aa).

The first 20 residues, 1–20 (MKFVLLFGVLLVTLFSYSSA), serve as a signal peptide directing secretion. The propeptide occupies 21-44 (EMLDDFDQADEDELLSLIEKEEAR). Cystine bridges form between Cys-48/Cys-63, Cys-55/Cys-72, Cys-62/Cys-87, and Cys-74/Cys-85.

This sequence belongs to the neurotoxin 19 (CSTX) family. 01 subfamily. As to expression, expressed by the venom gland.

It is found in the secreted. The protein is U3-lycotoxin-Ls1k of Lycosa singoriensis (Wolf spider).